Consider the following 549-residue polypeptide: Alpha-amylase (549 aa).

Residues 1–34 form the signal peptide; it reads MLTFHRIIRKGWMFLLAFLLTALLFCPTGQPAKA. Asp139, Asp196, Ala218, Asp220, Asp231, and Asp237 together coordinate Ca(2+). Asp196 contacts Na(+). Asp220, Asp231, Asp237, and Leu238 together coordinate Na(+). Asp239 serves as a coordination point for Ca(2+). Catalysis depends on Asp268, which acts as the Nucleophile. Position 272 (His272) interacts with Ca(2+). Catalysis depends on Glu298, which acts as the Proton donor. Ca(2+) is bound by residues Gly337, Phe339, Ser440, Asp441, and Asp464.

Belongs to the glycosyl hydrolase 13 family. As to quaternary structure, monomer. Requires Ca(2+) as cofactor. Na(+) is required as a cofactor.

The protein localises to the secreted. It carries out the reaction Endohydrolysis of (1-&gt;4)-alpha-D-glucosidic linkages in polysaccharides containing three or more (1-&gt;4)-alpha-linked D-glucose units.. This chain is Alpha-amylase (amyS), found in Geobacillus stearothermophilus (Bacillus stearothermophilus).